We begin with the raw amino-acid sequence, 1414 residues long: MSLEALLNKEEKGSGAAREAFMRRMNERFNSVCHKDAREQQYQDWKYLSYQEFELVNEWSAASRELTVNQCGQLLSNVKSAQAEWLAYEEFVAGRARLVAEVEAKREREQEEQEERQPARAKTKERARARGTAKRAVGRKATKAPAAPAEQEGGVPAARAAAKAPVRAEGAAEPPLKRELSGAKLEDEGEGEDDDEEEDEDDEDDEDEDEDEDEEEEEEEELEELEDIQLLDDDNDKDFSPEGGRSKSSIKLNTKLDINSDIALIQRELLKMAQKHKSAKAKKRKFTSCVVQRYDSDHTRLEVKVTLKQLHIKRLKRLLNEAKRKRAAEEALAANEQQGNLAKRRKTAQKQKPAANGAPAASSSEDVTVTEAATPVPAKVNGEAPSNESPVAAIPDINPTTGLPTYGMKMTAKEARAIQRHYDTTYITVWKDMARKDSAKLSRLVQQIQSIRSANFKKTSSLVAREARKWQSRNFRQVKDFQTRARRGVREMSSFWKKNEREERELKKRAEREAIEQAKKEEEERESKRQARKLNFLLTQTELYSHFIGSKIKTNELEGNMADSNLATAPDVSAIDLSKPPTRKNEVHTIDFDNEDDEELHRKAAQNASNALKETREKAKAFDGMSGDDEELNFQNPTSLGEITIEQPKILACTLKEYQLKGLNWLANLYDQGINGILADEMGLGKTVQSISVLAHLAERYNIWGPFIVVTPASTLHNWVNEIQKFVPDFKILPYWGNGNDRKILRRFWDRKHLRYSKDAPFHVMITSYQMIVSDAAYLQKMKWQYMILDEAQAIKSSQSSRWKNLLSFHCRNRLLLTGTPIQNSMQELWALLHFIMPSLFDSHDEFNDWFSKDIESHAQSNTQLNQQQLRRLHMILKPFMLRRIKKNVQSELGDKIEIDVMCDLTHRQAKLYQVLKSQVSASYDAIENAASNSSGDDSGNMSLSDSKIMNTVMEFRKVCNHPDLFERADVSSPFSFTSFGQTGSIMREGDVIDVQYSSKNPVSFHLPRLIYDDLILPNYNHDSDMRTKILNHMMSIFAPANSPDLCATLSKVAGVEPNSILRLSQEHIVKRAIDLSAHSPNVTRSGIFSVVYEDDKSSLSSLDKTLLINDKSDYLHTIARTTQNGVLASLLNIQGNFYENEYMNVLRPAYRPAAAAPPISIHVMGSSNFSIKRDNALFEPYITRSLGIIPPELQTRLTEKENNIFTALPISELYPAPLNKSFSSYISMPSMDRFITESAKLKKLDELLVRLKAGEHRVLIYFQMTRMMDLIEEYLTYRQYKHIRLDGSSKLEDRRDLVHDWQTKSDIFIFLLSTRAGGLGINLTSADTVIFYDSDWNPTIDSQAMDRAHRLGQTKQVTVYRLLIKGTIEERMRDRAKQKEHVQQVVMEGKTKENNVQTITANGKTLENLPLPL.

Positions arginine 106–arginine 128 are enriched in basic and acidic residues. Disordered regions lie at residues arginine 106–leucine 252 and glutamate 330–aspartate 396. Basic residues predominate over residues alanine 129–threonine 142. Over residues glycine 154–glutamate 173 the composition is skewed to low complexity. Residues proline 175 to glutamate 186 are compositionally biased toward basic and acidic residues. Positions aspartate 187–aspartate 236 are enriched in acidic residues. Residues isoleucine 265–leucine 341 are a coiled coil. The segment covering lysine 350–alanine 361 has biased composition (low complexity). Positions valine 429–threonine 554 constitute a DBINO domain. The Helicase ATP-binding domain occupies alanine 667–serine 839. Glutamate 681 to threonine 687 is an ATP binding site. The DEAQ box motif lies at aspartate 790–glutamine 793. The region spanning lysine 1244–glutamine 1398 is the Helicase C-terminal domain.

The protein belongs to the SNF2/RAD54 helicase family. As to quaternary structure, component of the INO80 chromatin-remodeling complex.

The protein resides in the nucleus. It catalyses the reaction ATP + H2O = ADP + phosphate + H(+). Its function is as follows. ATPase component of the INO80 complex which remodels chromatin by shifting nucleosomes and is involved in DNA repair. This chain is Chromatin-remodeling ATPase INO80 (INO80), found in Eremothecium gossypii (strain ATCC 10895 / CBS 109.51 / FGSC 9923 / NRRL Y-1056) (Yeast).